The sequence spans 215 residues: uncharacterized protein (215 aa).

The segment at 25-48 (LKSASPGPAPASQQASSFGSAPAQ) is disordered. Positions 27–47 (SASPGPAPASQQASSFGSAPA) are enriched in low complexity.

This is an uncharacterized protein from Homo sapiens (Human).